The following is a 692-amino-acid chain: Elongation factor G (692 aa).

The region spanning 8 to 282 is the tr-type G domain; that stretch reads KDYRNIGIMA…AVVDYLPSPL (275 aa). GTP contacts are provided by residues 17–24, 81–85, and 135–138; these read AHIDAGKT, DTPGH, and NKMD.

Belongs to the TRAFAC class translation factor GTPase superfamily. Classic translation factor GTPase family. EF-G/EF-2 subfamily.

It is found in the cytoplasm. Functionally, catalyzes the GTP-dependent ribosomal translocation step during translation elongation. During this step, the ribosome changes from the pre-translocational (PRE) to the post-translocational (POST) state as the newly formed A-site-bound peptidyl-tRNA and P-site-bound deacylated tRNA move to the P and E sites, respectively. Catalyzes the coordinated movement of the two tRNA molecules, the mRNA and conformational changes in the ribosome. This Mycoplasmopsis pulmonis (strain UAB CTIP) (Mycoplasma pulmonis) protein is Elongation factor G (fusA).